Consider the following 271-residue polypeptide: Ribonuclease 3 (271 aa).

In terms of domain architecture, RNase III spans 5-139 (PALLELKLDY…IMAAIYLDGG (135 aa)). Mg(2+) is bound at residue Glu-52. Asp-56 is a catalytic residue. Asp-125 and Glu-128 together coordinate Mg(2+). Residue Glu-128 is part of the active site. A DRBM domain is found at 172–241 (NFKSALQELA…ARGLYERLMG (70 aa)). Residues 241-271 (GDPIVPLPDDSPGDSPDDSGDAAESGVISAT) form a disordered region. Over residues 251–261 (SPGDSPDDSGD) the composition is skewed to acidic residues.

The protein belongs to the ribonuclease III family. Homodimer. The cofactor is Mg(2+).

Its subcellular location is the cytoplasm. It carries out the reaction Endonucleolytic cleavage to 5'-phosphomonoester.. In terms of biological role, digests double-stranded RNA. Involved in the processing of primary rRNA transcript to yield the immediate precursors to the large and small rRNAs (23S and 16S). Processes some mRNAs, and tRNAs when they are encoded in the rRNA operon. Processes pre-crRNA and tracrRNA of type II CRISPR loci if present in the organism. This is Ribonuclease 3 from Solibacter usitatus (strain Ellin6076).